We begin with the raw amino-acid sequence, 631 residues long: tRNA uridine 5-carboxymethylaminomethyl modification enzyme MnmG (631 aa).

15-20 contacts FAD; sequence GAGHAG. The disordered stretch occupies residues 214-233; that stretch reads YSKTEEEPGDKEPRHFSFTS. 276–290 contacts NAD(+); that stretch reads GPRYCPSIETKVVRF.

Belongs to the MnmG family. As to quaternary structure, homodimer. Heterotetramer of two MnmE and two MnmG subunits. Requires FAD as cofactor.

The protein resides in the cytoplasm. NAD-binding protein involved in the addition of a carboxymethylaminomethyl (cmnm) group at the wobble position (U34) of certain tRNAs, forming tRNA-cmnm(5)s(2)U34. This chain is tRNA uridine 5-carboxymethylaminomethyl modification enzyme MnmG, found in Lactobacillus delbrueckii subsp. bulgaricus (strain ATCC BAA-365 / Lb-18).